The following is a 392-amino-acid chain: Keratin, type I cuticular Ha4 (392 aa).

The interval 1 to 56 is head; sequence MSCESCLPALSCRTSCSSRPCVPPSCHGCTLPGACNIPANVGNCNWFCEGSFNGNE. In terms of domain architecture, IF rod spans 56–367; it reads EKETMQFLND…SLLESEDCNL (312 aa). The tract at residues 57–91 is coil 1A; that stretch reads KETMQFLNDRLASYMEKVRQLERENAELECRIQER. The interval 92–102 is linker 1; that stretch reads NQQQDPLVCPA. A coil 1B region spans residues 103–203; it reads YQAYFRTIEE…HEEEVNTLRC (101 aa). A linker 12 region spans residues 204–219; the sequence is QLGDRLNVEVDAAPTV. The coil 2 stretch occupies residues 220–363; the sequence is DLNRVLNETR…NTYRSLLESE (144 aa). Residues 364–392 form a tail region; that stretch reads DCNLPCNPCATTNASGSCCGPCGSSKRCC.

The protein belongs to the intermediate filament family. Expressed in the hair root in the hair shaft cuticle and cortex.

The chain is Keratin, type I cuticular Ha4 from Mus musculus (Mouse).